Consider the following 383-residue polypeptide: Neuropeptide Y receptor type 1 (383 aa).

Over 1–44 the chain is Extracellular; that stretch reads MNSTLSSQVENHSIYYNFSEKNSQFLAFENDDCHLPLAMIFTLA. N-linked (GlcNAc...) asparagine glycosylation is found at N2, N11, and N17. A helical membrane pass occupies residues 45–65; sequence LAYGAVIILGVSGNLALIIII. Over 66 to 76 the chain is Cytoplasmic; the sequence is LKQKEMRNVTN. Residues 77–97 traverse the membrane as a helical segment; the sequence is ILIVNLSFSDLLVAIMCLPFT. The Extracellular portion of the chain corresponds to 98-116; the sequence is FVYTLMDHWVFGEVMCKLN. An intrachain disulfide couples C113 to C198. A helical transmembrane segment spans residues 117–137; that stretch reads PFVQCVSITVSIFSLVLIAVE. The Cytoplasmic segment spans residues 138–154; that stretch reads RHQLIINPRGWRPSNRH. Residues 155–175 form a helical membrane-spanning segment; the sequence is AYVGIAVIWVLAVASSLPFLI. Over 176 to 211 the chain is Extracellular; the sequence is YQVLTDEPFQNVTLDAFKDKYVCFDKFLSDSHRLSY. A helical membrane pass occupies residues 212–232; the sequence is TTLLLVLQYFGPLCFIFICYF. The Cytoplasmic segment spans residues 233 to 260; it reads KIYIRLKRRNNMMDKMRDNKYRSSETKR. The chain crosses the membrane as a helical span at residues 261-281; sequence INVMLLSIVVAFAVCWLPLTI. Residues 282–299 lie on the Extracellular side of the membrane; it reads FNTVFDWNHQIIATCNHN. A helical membrane pass occupies residues 300-320; the sequence is LLFLLCHLTAMISTCINPIFY. Residues 321 to 383 are Cytoplasmic-facing; the sequence is GFLNKNFQRD…KIHSDDNEKI (63 aa). C338 carries S-palmitoyl cysteine lipidation. The residue at position 368 (S368) is a Phosphoserine.

The protein belongs to the G-protein coupled receptor 1 family.

Its subcellular location is the cell membrane. Receptor for neuropeptide Y and peptide YY. The sequence is that of Neuropeptide Y receptor type 1 (NPY1R) from Sus scrofa (Pig).